Here is a 1477-residue protein sequence, read N- to C-terminus: Neuralized-like protein 4 (1477 aa).

2 disordered regions span residues 1-26 and 168-196; these read MAEL…RKQP and QPPP…RPDK. The NHR 1 domain occupies 1 to 167; sequence MAELHPRTGK…KCTQITVLSC (167 aa). A compositionally biased stretch (acidic residues) spans 171–183; that stretch reads PEEEEEEDAEEQE. 4 consecutive NHR domains span residues 250–417, 450–616, 645–813, and 841–1010; these read ALLF…IVHN, QLLF…IMDE, DLRF…LTGG, and SHRF…TVSS. The interval 1012–1041 is disordered; that stretch reads LLEEPDATKPPSITSESEEEEDPADHGDPH. The NHR 6 domain occupies 1048 to 1211; it reads SLQFLANHGK…QCEQVSIVTG (164 aa).

In terms of processing, ubiquitinated. This ubiquitination leads to proteasomal degradation.

The protein localises to the cytoplasm. It localises to the cytoskeleton. It is found in the microtubule organizing center. The protein resides in the centrosome. Its subcellular location is the centriole. Functionally, promotes CCP110 ubiquitination and proteasome-dependent degradation. By counteracting accumulation of CP110, maintains normal centriolar homeostasis and preventing formation of ectopic microtubular organizing centers. The chain is Neuralized-like protein 4 (neurl4) from Xenopus tropicalis (Western clawed frog).